Here is a 567-residue protein sequence, read N- to C-terminus: Urease subunit alpha (567 aa).

The Urease domain occupies 128–567 (GGIDAHVHFI…LPMSQRYFLF (440 aa)). His-133, His-135, and Lys-216 together coordinate Ni(2+). At Lys-216 the chain carries N6-carboxylysine. Substrate is bound at residue His-218. Ni(2+) is bound by residues His-245 and His-271. The active-site Proton donor is the His-319. Asp-359 provides a ligand contact to Ni(2+).

This sequence belongs to the metallo-dependent hydrolases superfamily. Urease alpha subunit family. In terms of assembly, heterotrimer of UreA (gamma), UreB (beta) and UreC (alpha) subunits. Three heterotrimers associate to form the active enzyme. Ni cation serves as cofactor. In terms of processing, carboxylation allows a single lysine to coordinate two nickel ions.

It localises to the cytoplasm. The catalysed reaction is urea + 2 H2O + H(+) = hydrogencarbonate + 2 NH4(+). The protein operates within nitrogen metabolism; urea degradation; CO(2) and NH(3) from urea (urease route): step 1/1. This chain is Urease subunit alpha, found in Blochmanniella pennsylvanica (strain BPEN).